The primary structure comprises 102 residues: Citrate lyase acyl carrier protein (102 aa).

Residue S14 is modified to O-(phosphoribosyl dephospho-coenzyme A)serine.

The protein belongs to the CitD family. As to quaternary structure, oligomer with a subunit composition of (alpha,beta,gamma)6.

It localises to the cytoplasm. Its function is as follows. Covalent carrier of the coenzyme of citrate lyase. The sequence is that of Citrate lyase acyl carrier protein from Serratia proteamaculans (strain 568).